The sequence spans 853 residues: DNA mismatch repair protein MutS (853 aa).

614-621 (GPNMGGKS) is a binding site for ATP.

This sequence belongs to the DNA mismatch repair MutS family.

In terms of biological role, this protein is involved in the repair of mismatches in DNA. It is possible that it carries out the mismatch recognition step. This protein has a weak ATPase activity. The polypeptide is DNA mismatch repair protein MutS (Citrobacter koseri (strain ATCC BAA-895 / CDC 4225-83 / SGSC4696)).